Here is a 245-residue protein sequence, read N- to C-terminus: Octanoyltransferase (245 aa).

The BPL/LPL catalytic domain maps to 54 to 242; it reads QNAHEQVWLL…SFEQIFGPII (189 aa). Residues 93–100, 173–175, and 186–188 contribute to the substrate site; these read RGGEFTYH, AIG, and GVS. The active-site Acyl-thioester intermediate is the C204.

It belongs to the LipB family.

The protein resides in the cytoplasm. It carries out the reaction octanoyl-[ACP] + L-lysyl-[protein] = N(6)-octanoyl-L-lysyl-[protein] + holo-[ACP] + H(+). It participates in protein modification; protein lipoylation via endogenous pathway; protein N(6)-(lipoyl)lysine from octanoyl-[acyl-carrier-protein]: step 1/2. Its function is as follows. Catalyzes the transfer of endogenously produced octanoic acid from octanoyl-acyl-carrier-protein onto the lipoyl domains of lipoate-dependent enzymes. Lipoyl-ACP can also act as a substrate although octanoyl-ACP is likely to be the physiological substrate. This is Octanoyltransferase from Bartonella henselae (strain ATCC 49882 / DSM 28221 / CCUG 30454 / Houston 1) (Rochalimaea henselae).